A 704-amino-acid polypeptide reads, in one-letter code: Neutral ceramidase (704 aa).

An N-terminal signal peptide occupies residues 1-23; sequence MANSKMAFLAFLAVSFLCGLVSA. Asn-230 carries an N-linked (GlcNAc...) asparagine glycan. Ser-276 (nucleophile) is an active-site residue. Asn-362, Asn-550, and Asn-598 each carry an N-linked (GlcNAc...) asparagine glycan.

Belongs to the neutral ceramidase family. In terms of processing, N-glycosylated. As to expression, widely expressed in different tissues but enriched in neurons at all stages of development.

It localises to the secreted. It carries out the reaction an N-acylsphing-4-enine + H2O = sphing-4-enine + a fatty acid. Functionally, hydrolyzes the sphingolipid ceramide into sphingosine and free fatty acid at an optimal pH of 6.5-7.5. Acts as a key regulator of sphingolipid signaling metabolites by generating sphingosine at the cell surface. Regulates synaptic vesicle exocytosis and trafficking by controlling presynaptic terminal sphingolipid composition. This chain is Neutral ceramidase (CDase), found in Drosophila melanogaster (Fruit fly).